The primary structure comprises 210 residues: UPF0637 protein RBAM_014510 (210 aa).

This sequence belongs to the UPF0637 family.

The sequence is that of UPF0637 protein RBAM_014510 from Bacillus velezensis (strain DSM 23117 / BGSC 10A6 / LMG 26770 / FZB42) (Bacillus amyloliquefaciens subsp. plantarum).